Consider the following 195-residue polypeptide: Imidazoleglycerol-phosphate dehydratase (195 aa).

The protein belongs to the imidazoleglycerol-phosphate dehydratase family.

The protein localises to the cytoplasm. The catalysed reaction is D-erythro-1-(imidazol-4-yl)glycerol 3-phosphate = 3-(imidazol-4-yl)-2-oxopropyl phosphate + H2O. It participates in amino-acid biosynthesis; L-histidine biosynthesis; L-histidine from 5-phospho-alpha-D-ribose 1-diphosphate: step 6/9. The polypeptide is Imidazoleglycerol-phosphate dehydratase (Cupriavidus taiwanensis (strain DSM 17343 / BCRC 17206 / CCUG 44338 / CIP 107171 / LMG 19424 / R1) (Ralstonia taiwanensis (strain LMG 19424))).